The primary structure comprises 421 residues: Probable G-protein coupled receptor 151 (421 aa).

Topologically, residues 1–44 (MGKATLAVFADSDSSNMNESFAHLHFAGGYLPSDSKGWRTIIPS) are extracellular. The N-linked (GlcNAc...) asparagine glycan is linked to N18. Residues 45 to 65 (LLAAVCLVGFVGNLCVIGLLL) form a helical membrane-spanning segment. Topologically, residues 66 to 74 (HGVWKRKPS) are cytoplasmic. Residues 75–95 (MIHSLILNLSLADISLLLFSA) form a helical membrane-spanning segment. Residues 96–122 (PVRATAYVKGVWDLGWFVCKSSDWFTH) lie on the Extracellular side of the membrane. C114 and C190 are disulfide-bonded. Residues 123–143 (MCMAAKSLTFVVVAKVCFMYA) traverse the membrane as a helical segment. Residues 144–156 (SDPAKPVGTHNCT) lie on the Cytoplasmic side of the membrane. The helical transmembrane segment at 157–177 (IWSLLGAIWVVASLLPLPEWF) threads the bilayer. Topologically, residues 178 to 204 (FSTTRHHAGVEMCLVDVPAVAAEFMSL) are extracellular. Residues 205–225 (FGKLYPLLVFCLPLLLAGFYF) form a helical membrane-spanning segment. Over 226–258 (WRAYNQCKIRCAKTQNLRNQMRSKQLTVMLLST) the chain is Cytoplasmic. Residues 259–279 (AVTSALLWLPEWIAWLWVWHL) traverse the membrane as a helical segment. The Extracellular portion of the chain corresponds to 280–289 (KAGGPMPPQG). A helical membrane pass occupies residues 290–310 (FIALSQVLMFSISTVNPLIFL). The Cytoplasmic segment spans residues 311–421 (MMSEEFKAGL…HEGQETKGCN (111 aa)). Disordered regions lie at residues 346–381 (IETL…TDKV) and 394–421 (HERD…KGCN). Composition is skewed to basic and acidic residues over residues 364-379 (DTDR…ETTD) and 409-421 (PWEH…KGCN).

It belongs to the G-protein coupled receptor 1 family. Exclusively expressed in neurons of the habenular complex. The expression is particularly prominent in the medial habenular nucleus, whereas the lateral habenular nucleus exhibited a lower level of expression.

Its subcellular location is the cell membrane. Orphan receptor. The chain is Probable G-protein coupled receptor 151 (Gpr151) from Rattus norvegicus (Rat).